The primary structure comprises 344 residues: G-protein coupled receptor str-217 (344 aa).

At 1 to 10 the chain is on the extracellular side; it reads MLLFQKTLSR. The helical transmembrane segment at 11 to 31 threads the bilayer; it reads VAAPISVAANLILILLIIFKS. The Cytoplasmic portion of the chain corresponds to 32-39; sequence PAQMGNYK. Residues 40-60 form a helical membrane-spanning segment; that stretch reads YLLIGLSIFEMSYAVLDVVSE. Residues 61 to 88 lie on the Extracellular side of the membrane; that stretch reads TTVLSIKKSFVVVVPYKDRSFGQETAMD. Residues 89-109 traverse the membrane as a helical segment; the sequence is INLIYCGFFGFSMGMFVVIFA. Topologically, residues 110-128 are cytoplasmic; that stretch reads YRSFLTTGNTILRKFEGFK. Residues 129 to 149 traverse the membrane as a helical segment; that stretch reads IISWFAYPLFYAIVWILVAWG. Residues 150–195 are Extracellular-facing; it reads PLASFPEMDIVVRPFLLDELNMTVDEVAYTGRLFYSTIDNSLRYSA. N170 carries an N-linked (GlcNAc...) asparagine glycan. A helical transmembrane segment spans residues 196 to 216; that stretch reads ILTGVLQWVLTASSLFLVIFF. Residues 217-256 are Cytoplasmic-facing; sequence GLRCYFHYGKLVQLTDVQSIRLRQLQNQLFLALVCQATVP. Residues 257-277 traverse the membrane as a helical segment; sequence LILMHIPVTILYTCCVLNIVF. Residues 278 to 279 lie on the Extracellular side of the membrane; it reads NP. A helical membrane pass occupies residues 280–300; sequence FSVATTIALFPAIDPLPTIFI. Topologically, residues 301 to 344 are cytoplasmic; sequence VKNYRVALFEFVCPSCLCWSETLKHMGSNRITSYRSNTVNALSM.

This sequence belongs to the nematode receptor-like protein str family. Expressed in the ADL chemosensory neurons.

The protein localises to the cell membrane. Functionally, probable G-protein coupled receptor. This chain is G-protein coupled receptor str-217, found in Caenorhabditis elegans.